A 67-amino-acid chain; its full sequence is Transcription elongation factor Spt4 (67 aa).

Positions 7, 10, 19, and 22 each coordinate Zn(2+).

It belongs to the archaeal Spt4 family. Heterodimer composed of Spt4 and Spt5. Interacts with RNA polymerase (RNAP). The complex interacts with FttA.

Its subcellular location is the chromosome. The Stp4-Spt5 complex stimulates transcription elongation on both naked DNA and histone-bound DNA (chromatin), facilitating transcription through the histone barrier. Neither protein functions alone. The complex also stimulates the transcription termination activity of FttA, neither protein alone stimulates FttA-dependent termination. This Thermococcus kodakarensis (strain ATCC BAA-918 / JCM 12380 / KOD1) (Pyrococcus kodakaraensis (strain KOD1)) protein is Transcription elongation factor Spt4.